Reading from the N-terminus, the 258-residue chain is MTVEGRVVLITGAAGGIGKVLCKMFTELGDRVAGIDIVDPSKVQDAALALQADVSKADQIETAIEKVIQTLGPIDVLINNAGLADDTPFEQLSHESWDHDVSLVLRGNYLTQRYVIPHMAKQGKGGSIVNIGSVNGHIYLGSPAYSAAKAGLENLTKALAVRYGPLGIRVNVCAPGTIWSPAWDERFKKHPDVGDRMKRWYPVGRLGTPEDVARAVIFLADSKNSFITGTTLYVDGGLLAGNPCLIQDIYSENNNFVF.

Residues Ile17, Asp53, Asn80, Arg113, Tyr145, Lys149, Ile178, and Ser180 each coordinate NADP(+). The Proton donor role is filled by Tyr145. Lys149 (lowers pKa of active site Tyr) is an active-site residue.

This sequence belongs to the short-chain dehydrogenases/reductases (SDR) family.

The protein resides in the cytoplasm. It is found in the nucleus. This is an uncharacterized protein from Schizosaccharomyces pombe (strain 972 / ATCC 24843) (Fission yeast).